The chain runs to 298 residues: HTH-type transcriptional regulator ArgP (298 aa).

Residues 4–60 (LDYRWIEALDSVVSKGSFERAAEQLFISQSAVSQRIKQLEKYLAQPVLIREQPPRPT) enclose the HTH lysR-type domain. Positions 21–40 (FERAAEQLFISQSAVSQRIK) form a DNA-binding region, H-T-H motif.

It belongs to the LysR transcriptional regulatory family. As to quaternary structure, homodimer.

Functionally, controls the transcription of genes involved in arginine and lysine metabolism. The sequence is that of HTH-type transcriptional regulator ArgP from Vibrio cholerae serotype O1 (strain ATCC 39315 / El Tor Inaba N16961).